A 670-amino-acid chain; its full sequence is Alpha-1,4-glucan:maltose-1-phosphate maltosyltransferase (670 aa).

Lysine 262, glutamine 322, and aspartate 357 together coordinate alpha-maltose 1-phosphate. The active-site Nucleophile is the aspartate 393. Residue asparagine 394 coordinates alpha-maltose 1-phosphate. Catalysis depends on glutamate 422, which acts as the Proton donor. 534–535 contributes to the alpha-maltose 1-phosphate binding site; it reads KY.

It belongs to the glycosyl hydrolase 13 family. GlgE subfamily. As to quaternary structure, homodimer.

The enzyme catalyses alpha-maltose 1-phosphate + [(1-&gt;4)-alpha-D-glucosyl](n) = [(1-&gt;4)-alpha-D-glucosyl](n+2) + phosphate. Its function is as follows. Maltosyltransferase that uses maltose 1-phosphate (M1P) as the sugar donor to elongate linear or branched alpha-(1-&gt;4)-glucans. Is involved in a branched alpha-glucan biosynthetic pathway from trehalose, together with TreS, Mak and GlgB. This Chlorobaculum tepidum (strain ATCC 49652 / DSM 12025 / NBRC 103806 / TLS) (Chlorobium tepidum) protein is Alpha-1,4-glucan:maltose-1-phosphate maltosyltransferase.